The sequence spans 500 residues: Trehalose-6-phosphate synthase (500 aa).

Arg28 contributes to the D-glucose 6-phosphate binding site. A UDP-alpha-D-glucose-binding site is contributed by Gly48–Gly49. Residues Tyr108 and Asp162 each contribute to the D-glucose 6-phosphate site. 2 residues coordinate UDP-alpha-D-glucose: Arg304 and Lys309. Arg342 contributes to the D-glucose 6-phosphate binding site. Leu407–Glu411 is a UDP-alpha-D-glucose binding site.

The protein belongs to the glycosyltransferase 20 family. Homotetramer.

It carries out the reaction ADP-alpha-D-glucose + D-glucose 6-phosphate = alpha,alpha-trehalose 6-phosphate + ADP + H(+). The catalysed reaction is CDP-alpha-D-glucose + D-glucose 6-phosphate = alpha,alpha-trehalose 6-phosphate + CDP + H(+). It catalyses the reaction GDP-alpha-D-glucose + D-glucose 6-phosphate = alpha,alpha-trehalose 6-phosphate + GDP + H(+). The enzyme catalyses TDP-alpha-D-glucose + D-glucose 6-phosphate = 5-methyl-UDP + alpha,alpha-trehalose 6-phosphate + H(+). It carries out the reaction D-glucose 6-phosphate + UDP-alpha-D-glucose = alpha,alpha-trehalose 6-phosphate + UDP + H(+). Its pathway is glycan biosynthesis; trehalose biosynthesis. Functionally, probably involved in the osmoprotection via the biosynthesis of trehalose and in the production of glycogen and alpha-glucan via the TreS-Pep2 branch involved in the biosynthesis of maltose-1-phosphate (M1P). Catalyzes the transfer of glucose from UDP-glucose (UDP-Glc) to D-glucose 6-phosphate (Glc-6-P) to form trehalose-6-phosphate. Probably also able to use ADP-Glc, CDP-Glc, GDP-Glc and TDP-Glc as glucosyl donors. This chain is Trehalose-6-phosphate synthase, found in Mycobacterium tuberculosis (strain CDC 1551 / Oshkosh).